A 94-amino-acid chain; its full sequence is Co-chaperonin GroES (94 aa).

This sequence belongs to the GroES chaperonin family. As to quaternary structure, heptamer of 7 subunits arranged in a ring. Interacts with the chaperonin GroEL.

Its subcellular location is the cytoplasm. Functionally, together with the chaperonin GroEL, plays an essential role in assisting protein folding. The GroEL-GroES system forms a nano-cage that allows encapsulation of the non-native substrate proteins and provides a physical environment optimized to promote and accelerate protein folding. GroES binds to the apical surface of the GroEL ring, thereby capping the opening of the GroEL channel. The chain is Co-chaperonin GroES from Halothermothrix orenii (strain H 168 / OCM 544 / DSM 9562).